The following is a 237-amino-acid chain: LexA repressor (237 aa).

Positions phenylalanine 26–threonine 46 form a DNA-binding region, H-T-H motif. Catalysis depends on for autocatalytic cleavage activity residues serine 158 and lysine 196.

Belongs to the peptidase S24 family. In terms of assembly, homodimer.

The catalysed reaction is Hydrolysis of Ala-|-Gly bond in repressor LexA.. Represses a number of genes involved in the response to DNA damage (SOS response), including recA and lexA. In the presence of single-stranded DNA, RecA interacts with LexA causing an autocatalytic cleavage which disrupts the DNA-binding part of LexA, leading to derepression of the SOS regulon and eventually DNA repair. The protein is LexA repressor of Rhodospirillum centenum (strain ATCC 51521 / SW).